The chain runs to 682 residues: MQDSVFRIESEYVPRGDQPEAITQLSDNIRAGVAHQVLLGVTGSGKTFTMAHTIERCQRPALILAPNKTLAAQLYNEFRALFPHNAVEYFVSYYDYYQPEAYVPTSDTYIEKDSSINDNIDKLRHAATHALLTRRDVIIIASVSCIYGLGSPEYYAKMVIPVEAGQHMSMDSLIGRLVDVQYERNDYDFHRGTFRVRGDVLEVIPAYHHERALRLEFFGDEIDSIKEIDPLTGNVLGDVGKTVIYPASHYVSDRDNLNRAVSDIREELRLRLEEYRQGNRLVEAQRLEQRTMLDLEMIEEMGYCTGIENYSRHLDGRTAGEPPACLLDYFPDNFILFVDESHITVSQVGAMYKGDRSRKQTLVDFGFRLPSALDNRPLEFSEFEKRLNQVVYVSATPSRWELDRSEGIVVEQIIRPTGLLDPLTEVRPTKGQMEDLMTECRSRTARDERVLVTTLTKRMAEDLTEYLTSMGVSARYLHSDIDTMERMAIIQALRRKEFDVLVGINLLREGLDIPEVSLVAILDADKEGFLRSTGSLIQTFGRAARNVDGRVIMYADSVTRSMTAAMQETERRREKQRLYNEEHGIEPVSVRKSLETPFDTLYSDARSAAAKGRGKGRGRQAAPAQTAAEDTTAYGISAEELGGLIQRLEREMRESARDLEFEKAAELRDRIRMLRERLLQQD.

Positions Asp27–Ile414 constitute a Helicase ATP-binding domain. Gly40–Thr47 lines the ATP pocket. Positions Tyr93–Ile116 match the Beta-hairpin motif. One can recognise a Helicase C-terminal domain in the interval Gln432–Leu594. Positions Ala609–Ala628 are disordered. The region spanning Gly642–Arg677 is the UVR domain.

Belongs to the UvrB family. Forms a heterotetramer with UvrA during the search for lesions. Interacts with UvrC in an incision complex.

It localises to the cytoplasm. In terms of biological role, the UvrABC repair system catalyzes the recognition and processing of DNA lesions. A damage recognition complex composed of 2 UvrA and 2 UvrB subunits scans DNA for abnormalities. Upon binding of the UvrA(2)B(2) complex to a putative damaged site, the DNA wraps around one UvrB monomer. DNA wrap is dependent on ATP binding by UvrB and probably causes local melting of the DNA helix, facilitating insertion of UvrB beta-hairpin between the DNA strands. Then UvrB probes one DNA strand for the presence of a lesion. If a lesion is found the UvrA subunits dissociate and the UvrB-DNA preincision complex is formed. This complex is subsequently bound by UvrC and the second UvrB is released. If no lesion is found, the DNA wraps around the other UvrB subunit that will check the other stand for damage. The protein is UvrABC system protein B of Oleidesulfovibrio alaskensis (strain ATCC BAA-1058 / DSM 17464 / G20) (Desulfovibrio alaskensis).